Consider the following 448-residue polypeptide: Probable rhamnogalacturonase E (448 aa).

Residues 1–22 form the signal peptide; the sequence is MTWSTSFLVATSLLSIINSVHA. Cysteines 43 and 69 form a disulfide. N-linked (GlcNAc...) asparagine glycosylation is found at Asn-54, Asn-92, and Asn-131. Asp-221 acts as the Proton donor in catalysis. Cys-223 and Cys-240 are joined by a disulfide. N-linked (GlcNAc...) asparagine glycans are attached at residues Asn-256 and Asn-284. His-296 is an active-site residue. 2 N-linked (GlcNAc...) asparagine glycosylation sites follow: Asn-323 and Asn-328. 2 cysteine pairs are disulfide-bonded: Cys-346–Cys-352 and Cys-374–Cys-382.

Belongs to the glycosyl hydrolase 28 family.

The protein localises to the secreted. In terms of biological role, pectinolytic enzymes consist of four classes of enzymes: pectine lyase, polygalacturonase, pectin methylesterase and rhamnogalacturonase. Hydrolyzes alpha-D-galacturonopyranosyl-(1,2)-alpha-L-rhamnopyranosyl linkages in the backbone of the hairy regions of pectins. This Aspergillus niger (strain ATCC MYA-4892 / CBS 513.88 / FGSC A1513) protein is Probable rhamnogalacturonase E (rhgE).